Reading from the N-terminus, the 432-residue chain is Isocitrate lyase (432 aa).

Residues 1 to 24 (MSNVGKPRTAQEIQQDWDTNPRWN) form a disordered region. The segment covering 11–22 (QEIQQDWDTNPR) has biased composition (polar residues). 93–95 (SGW) contributes to the substrate binding site. Position 155 (Asp-155) interacts with Mg(2+). Cys-193 functions as the Proton acceptor in the catalytic mechanism. Substrate contacts are provided by residues 194–195 (GH), Arg-230, 315–319 (NCSPS), and Thr-349.

The protein belongs to the isocitrate lyase/PEP mutase superfamily. Isocitrate lyase family. In terms of assembly, homotetramer. The cofactor is Mg(2+).

The catalysed reaction is D-threo-isocitrate = glyoxylate + succinate. Its pathway is carbohydrate metabolism; glyoxylate cycle; (S)-malate from isocitrate: step 1/2. With respect to regulation, inhibited by 3-phosphoglycerate, 6-phosphogluconate, phosphoenolpyruvate (PEP), fructose 1,6-bisphosphate, glycolate, oxalate, and itaconate. Functionally, involved in the metabolic adaptation in response to environmental changes. Catalyzes the reversible formation of succinate and glyoxylate from isocitrate, a key step of the glyoxylate cycle, which operates as an anaplerotic route for replenishing the tricarboxylic acid cycle during growth on fatty acid substrates. In Corynebacterium glutamicum (strain ATCC 13032 / DSM 20300 / JCM 1318 / BCRC 11384 / CCUG 27702 / LMG 3730 / NBRC 12168 / NCIMB 10025 / NRRL B-2784 / 534), this protein is Isocitrate lyase.